A 118-amino-acid chain; its full sequence is Large ribosomal subunit protein uL18 (118 aa).

The protein belongs to the universal ribosomal protein uL18 family. As to quaternary structure, part of the 50S ribosomal subunit; part of the 5S rRNA/L5/L18/L25 subcomplex. Contacts the 5S and 23S rRNAs.

Its function is as follows. This is one of the proteins that bind and probably mediate the attachment of the 5S RNA into the large ribosomal subunit, where it forms part of the central protuberance. This chain is Large ribosomal subunit protein uL18, found in Phenylobacterium zucineum (strain HLK1).